The sequence spans 262 residues: MRRTLYRLMIELTNGRFTSYILRKFAQSRLSSIIIPSYAKVFQINQDEMEKGLKEYRTLHELFTRKLKEGKRSIDTDASSIVSPVDGVFADHGPIEDTKTFDIKGKRYSIVDMLGNEERAQRYAGGTYMVIYLSPSHYHRIHSPLSGSVTERFVLGRKSYPVNAAGMEYGKEPLSKNYRSVTEVNSDGEHMALVKVGAMFVNSIELLHERDTVQKGEEMAYFTFGSTVVLLFEKDMIEVVQELKSGQELRLGEKIATRLAHK.

Catalysis depends on charge relay system; for autoendoproteolytic cleavage activity residues D86, H142, and S226. S226 functions as the Schiff-base intermediate with substrate; via pyruvic acid; for decarboxylase activity in the catalytic mechanism. The residue at position 226 (S226) is a Pyruvic acid (Ser); by autocatalysis.

This sequence belongs to the phosphatidylserine decarboxylase family. PSD-B subfamily. Prokaryotic type I sub-subfamily. In terms of assembly, heterodimer of a large membrane-associated beta subunit and a small pyruvoyl-containing alpha subunit. Requires pyruvate as cofactor. In terms of processing, is synthesized initially as an inactive proenzyme. Formation of the active enzyme involves a self-maturation process in which the active site pyruvoyl group is generated from an internal serine residue via an autocatalytic post-translational modification. Two non-identical subunits are generated from the proenzyme in this reaction, and the pyruvate is formed at the N-terminus of the alpha chain, which is derived from the carboxyl end of the proenzyme. The autoendoproteolytic cleavage occurs by a canonical serine protease mechanism, in which the side chain hydroxyl group of the serine supplies its oxygen atom to form the C-terminus of the beta chain, while the remainder of the serine residue undergoes an oxidative deamination to produce ammonia and the pyruvoyl prosthetic group on the alpha chain. During this reaction, the Ser that is part of the protease active site of the proenzyme becomes the pyruvoyl prosthetic group, which constitutes an essential element of the active site of the mature decarboxylase.

It localises to the cell membrane. The catalysed reaction is a 1,2-diacyl-sn-glycero-3-phospho-L-serine + H(+) = a 1,2-diacyl-sn-glycero-3-phosphoethanolamine + CO2. It participates in phospholipid metabolism; phosphatidylethanolamine biosynthesis; phosphatidylethanolamine from CDP-diacylglycerol: step 2/2. Functionally, catalyzes the formation of phosphatidylethanolamine (PtdEtn) from phosphatidylserine (PtdSer). This Bacillus cereus (strain AH820) protein is Phosphatidylserine decarboxylase proenzyme.